A 293-amino-acid chain; its full sequence is Zinc metalloproteinase nas-2 (293 aa).

The signal sequence occupies residues methionine 1–proline 17. Residues lysine 18–arginine 67 constitute a propeptide that is removed on maturation. Residues arginine 67–lysine 260 enclose the Peptidase M12A domain. A glycan (N-linked (GlcNAc...) asparagine) is linked at asparagine 111. Disulfide bonds link cysteine 114-cysteine 259 and cysteine 139-cysteine 169. Histidine 180 lines the Zn(2+) pocket. The active site involves glutamate 181. Zn(2+)-binding residues include histidine 184 and histidine 190. Asparagine 287 is a glycosylation site (N-linked (GlcNAc...) asparagine).

Zn(2+) serves as cofactor.

It localises to the secreted. Its function is as follows. Metalloprotease. The polypeptide is Zinc metalloproteinase nas-2 (nas-2) (Caenorhabditis elegans).